The following is a 218-amino-acid chain: MSDNDELQQIAHLRREYTRGGLRRNDLPAEPLTLFERWLGQACDARLADPTAMVVATVDENGQPYQRIVLLKHYDEKGMVFYTNLGSRKAHHLENNPRISLLFPWHMLERQVMVTGKAERLSTLEVVKYFHSRPRDSQIGAWVSKQSSRISARGILESKFLELKQKFQQGEVPLPSFWGGFRVNIEQMEFWQGGEHRLHDRFLYQRENNAWKIDRLAP.

Substrate contacts are provided by residues 14–17 and K72; that span reads RREY. Residues 67–72, 82–83, R88, K89, and Q111 contribute to the FMN site; these read RIVLLK and YT. 3 residues coordinate substrate: Y129, R133, and S137. Residues 146–147 and W191 contribute to the FMN site; that span reads QS. 197-199 serves as a coordination point for substrate; it reads RLH. R201 serves as a coordination point for FMN.

This sequence belongs to the pyridoxamine 5'-phosphate oxidase family. Homodimer. The cofactor is FMN.

It catalyses the reaction pyridoxamine 5'-phosphate + O2 + H2O = pyridoxal 5'-phosphate + H2O2 + NH4(+). It carries out the reaction pyridoxine 5'-phosphate + O2 = pyridoxal 5'-phosphate + H2O2. It functions in the pathway cofactor metabolism; pyridoxal 5'-phosphate salvage; pyridoxal 5'-phosphate from pyridoxamine 5'-phosphate: step 1/1. It participates in cofactor metabolism; pyridoxal 5'-phosphate salvage; pyridoxal 5'-phosphate from pyridoxine 5'-phosphate: step 1/1. Functionally, catalyzes the oxidation of either pyridoxine 5'-phosphate (PNP) or pyridoxamine 5'-phosphate (PMP) into pyridoxal 5'-phosphate (PLP). The chain is Pyridoxine/pyridoxamine 5'-phosphate oxidase from Citrobacter koseri (strain ATCC BAA-895 / CDC 4225-83 / SGSC4696).